The chain runs to 60 residues: Toxin 4.9.6 (60 aa).

Cystine bridges form between Cys3-Cys22, Cys17-Cys38, Cys40-Cys52, and Cys53-Cys58.

It belongs to the three-finger toxin family. Short-chain subfamily. Orphan group XI sub-subfamily. In terms of tissue distribution, expressed by the venom gland.

Its subcellular location is the secreted. This is Toxin 4.9.6 from Dendroaspis viridis (Western green mamba).